The chain runs to 353 residues: T-complex protein 1 subunit eta (353 aa).

Belongs to the TCP-1 chaperonin family. As to quaternary structure, heterooligomeric complex of about 850 to 900 kDa that forms two stacked rings, 12 to 16 nm in diameter.

It is found in the cytoplasm. In terms of biological role, molecular chaperone; assists the folding of proteins upon ATP hydrolysis. Known to play a role, in vitro, in the folding of actin and tubulin. This is T-complex protein 1 subunit eta from Tetrahymena thermophila.